Reading from the N-terminus, the 295-residue chain is Bifunctional protein FolD (295 aa).

Residues glycine 163–serine 165, serine 188, and isoleucine 229 contribute to the NADP(+) site.

The protein belongs to the tetrahydrofolate dehydrogenase/cyclohydrolase family. Homodimer.

The catalysed reaction is (6R)-5,10-methylene-5,6,7,8-tetrahydrofolate + NADP(+) = (6R)-5,10-methenyltetrahydrofolate + NADPH. It catalyses the reaction (6R)-5,10-methenyltetrahydrofolate + H2O = (6R)-10-formyltetrahydrofolate + H(+). The protein operates within one-carbon metabolism; tetrahydrofolate interconversion. Functionally, catalyzes the oxidation of 5,10-methylenetetrahydrofolate to 5,10-methenyltetrahydrofolate and then the hydrolysis of 5,10-methenyltetrahydrofolate to 10-formyltetrahydrofolate. The polypeptide is Bifunctional protein FolD (Hyphomonas neptunium (strain ATCC 15444)).